We begin with the raw amino-acid sequence, 205 residues long: Adenylyl-sulfate kinase (205 aa).

31 to 38 is a binding site for ATP; sequence GLSGAGKS. The Phosphoserine intermediate role is filled by Ser105.

The protein belongs to the APS kinase family.

It carries out the reaction adenosine 5'-phosphosulfate + ATP = 3'-phosphoadenylyl sulfate + ADP + H(+). It functions in the pathway sulfur metabolism; hydrogen sulfide biosynthesis; sulfite from sulfate: step 2/3. In terms of biological role, catalyzes the synthesis of activated sulfate. In Shewanella sp. (strain MR-4), this protein is Adenylyl-sulfate kinase.